We begin with the raw amino-acid sequence, 200 residues long: ATP-dependent Clp protease proteolytic subunit 3 (200 aa).

Ser101 acts as the Nucleophile in catalysis. His126 is an active-site residue.

The protein belongs to the peptidase S14 family. Fourteen ClpP subunits assemble into 2 heptameric rings which stack back to back to give a disk-like structure with a central cavity, resembling the structure of eukaryotic proteasomes.

It localises to the cytoplasm. It catalyses the reaction Hydrolysis of proteins to small peptides in the presence of ATP and magnesium. alpha-casein is the usual test substrate. In the absence of ATP, only oligopeptides shorter than five residues are hydrolyzed (such as succinyl-Leu-Tyr-|-NHMec, and Leu-Tyr-Leu-|-Tyr-Trp, in which cleavage of the -Tyr-|-Leu- and -Tyr-|-Trp bonds also occurs).. Cleaves peptides in various proteins in a process that requires ATP hydrolysis. Has a chymotrypsin-like activity. Plays a major role in the degradation of misfolded proteins. In Parasynechococcus marenigrum (strain WH8102), this protein is ATP-dependent Clp protease proteolytic subunit 3.